The following is a 94-amino-acid chain: Co-chaperonin GroES (94 aa).

Belongs to the GroES chaperonin family. Heptamer of 7 subunits arranged in a ring. Interacts with the chaperonin GroEL.

The protein localises to the cytoplasm. In terms of biological role, together with the chaperonin GroEL, plays an essential role in assisting protein folding. The GroEL-GroES system forms a nano-cage that allows encapsulation of the non-native substrate proteins and provides a physical environment optimized to promote and accelerate protein folding. GroES binds to the apical surface of the GroEL ring, thereby capping the opening of the GroEL channel. The sequence is that of Co-chaperonin GroES from Thermoanaerobacter pseudethanolicus (strain ATCC 33223 / 39E) (Clostridium thermohydrosulfuricum).